We begin with the raw amino-acid sequence, 153 residues long: Putative riboflavin kinase (153 aa).

The Mg(2+) site is built by T28 and N30. Catalysis depends on E80, which acts as the Nucleophile.

In terms of assembly, monomer. The cofactor is Zn(2+). Mg(2+) serves as cofactor.

It localises to the cytoplasm. The catalysed reaction is riboflavin + ATP = FMN + ADP + H(+). It participates in cofactor biosynthesis; FMN biosynthesis; FMN from riboflavin (ATP route): step 1/1. Catalyzes the phosphorylation of riboflavin (vitamin B2) to form flavin-mononucleotide (FMN). This is Putative riboflavin kinase from Drosophila melanogaster (Fruit fly).